The primary structure comprises 161 residues: ATP synthase subunit b 2 (161 aa).

Residues 13–33 traverse the membrane as a helical segment; sequence IVWLVIALVAMYFVMSRLAIP.

Belongs to the ATPase B chain family. F-type ATPases have 2 components, F(1) - the catalytic core - and F(0) - the membrane proton channel. F(1) has five subunits: alpha(3), beta(3), gamma(1), delta(1), epsilon(1). F(0) has three main subunits: a(1), b(2) and c(10-14). The alpha and beta chains form an alternating ring which encloses part of the gamma chain. F(1) is attached to F(0) by a central stalk formed by the gamma and epsilon chains, while a peripheral stalk is formed by the delta and b chains.

It localises to the cell inner membrane. F(1)F(0) ATP synthase produces ATP from ADP in the presence of a proton or sodium gradient. F-type ATPases consist of two structural domains, F(1) containing the extramembraneous catalytic core and F(0) containing the membrane proton channel, linked together by a central stalk and a peripheral stalk. During catalysis, ATP synthesis in the catalytic domain of F(1) is coupled via a rotary mechanism of the central stalk subunits to proton translocation. In terms of biological role, component of the F(0) channel, it forms part of the peripheral stalk, linking F(1) to F(0). The b'-subunit is a diverged and duplicated form of b found in plants and photosynthetic bacteria. The sequence is that of ATP synthase subunit b 2 (atpF2) from Rhodospirillum rubrum (strain ATCC 11170 / ATH 1.1.1 / DSM 467 / LMG 4362 / NCIMB 8255 / S1).